We begin with the raw amino-acid sequence, 82 residues long: Diphthamide biosynthesis protein 3 (82 aa).

The DPH-type MB domain maps to 4 to 60 (FHDEVEIEDFQYDEDSETYFYPCPCGDNFCITKEDLENGEDVATCPSCSLIIKVIYD). The Fe cation site is built by Cys-26, Cys-28, Cys-48, and Cys-51.

It belongs to the DPH3 family. As to quaternary structure, component of the 2-(3-amino-3-carboxypropyl)histidine synthase complex composed of DPH1, DPH2, DPH3 and a NADH-dependent reductase. Interacts with SERGEF. Fe(2+) serves as cofactor.

It localises to the cytoplasm. The protein resides in the nucleus. The enzyme catalyses [3Fe-4S](1+)-[protein] + Fe(2+)-[Dph3] = [3Fe-4S](0)-[protein] + Fe(3+)-[Dph3]. It catalyses the reaction 2 [3Fe-4S](0)-[protein] + 2 Fe(2+)-[Dph3] + NADH = 2 [4Fe-4S](1+)-[protein] + 2 [Dph3] + NAD(+) + H(+). It participates in protein modification; peptidyl-diphthamide biosynthesis. Its function is as follows. Required for the first step of diphthamide biosynthesis, a post-translational modification of histidine which occurs in elongation factor 2. DPH1 and DPH2 transfer a 3-amino-3-carboxypropyl (ACP) group from S-adenosyl-L-methionine (SAM) to a histidine residue, the reaction is assisted by a reduction system comprising DPH3 and a NADH-dependent reductase. Acts as an electron donor to reduce the Fe-S cluster in DPH1-DPH2 keeping the [4Fe-4S] clusters in the active and reduced state. Restores iron to DPH1-DPH2 iron-sulfur clusters which have degraded from [4Fe-4S] to [3Fe-4S] by donating an iron atom to reform [4Fe-4S] clusters, in a manner dependent on the presence of elongation factor 2 and SAM. Associates with the elongator complex and is required for tRNA Wobble base modifications mediated by the elongator complex. The elongator complex is required for multiple tRNA modifications, including mcm5U (5-methoxycarbonylmethyl uridine), mcm5s 2U (5-methoxycarbonylmethyl-2-thiouridine), and ncm5U (5-carbamoylmethyl uridine). In Bos taurus (Bovine), this protein is Diphthamide biosynthesis protein 3 (DPH3).